The sequence spans 234 residues: Large ribosomal subunit protein uL1 (234 aa).

The protein belongs to the universal ribosomal protein uL1 family. As to quaternary structure, part of the 50S ribosomal subunit.

Functionally, binds directly to 23S rRNA. The L1 stalk is quite mobile in the ribosome, and is involved in E site tRNA release. Its function is as follows. Protein L1 is also a translational repressor protein, it controls the translation of the L11 operon by binding to its mRNA. Peptides originating from the N-terminal end of L1 have antibacterial activity against bacteria such as E.coli and B.megaterium and modest antifungal activities. Has no effect on H.pylori itself. Peptides are not hemolytic against mammalian cells. These peptides may be released in the stomach during altruistic lysis to kill other fast growing bacteria. In Helicobacter pylori (strain ATCC 700392 / 26695) (Campylobacter pylori), this protein is Large ribosomal subunit protein uL1.